The chain runs to 300 residues: Arrestin domain-containing protein 4 (300 aa).

Short sequence motifs (PPxY motif) lie at residues 231-234 and 276-279; these read PPNY and PPLY.

This sequence belongs to the arrestin family. Interacts with ADRB2. Interacts (via PPxY motifs) with ITCH, NEDD4L and WWP2. Interacts with AVPR2. Identified in a complex containing at least ARRDC4, AVPR2 and HGS. Interacts with SLC11A2; controls the incorporation of SLC11A2 into extracellular vesicles through an ubiquitination-dependent mechanism. Interacts with TRIM65.

Its subcellular location is the early endosome. The protein localises to the cell membrane. It is found in the cytoplasmic vesicle. Its function is as follows. Functions as an adapter recruiting ubiquitin-protein ligases to their specific substrates. Plays a role in endocytosis of activated G protein-coupled receptors (GPCRs) Through an ubiquitination-dependent mechanism also plays a role in the incorporation of SLC11A2 into extracellular vesicles. May play a role in glucose uptake. Participates in innate immune response by promoting IFIH1/MDA5 activation through interaction with TRIM65. The sequence is that of Arrestin domain-containing protein 4 (Arrdc4) from Rattus norvegicus (Rat).